A 156-amino-acid chain; its full sequence is Phosphopantetheine adenylyltransferase (156 aa).

It belongs to the eukaryotic CoaD family.

The protein localises to the cytoplasm. The enzyme catalyses (R)-4'-phosphopantetheine + ATP + H(+) = 3'-dephospho-CoA + diphosphate. Its pathway is cofactor biosynthesis; coenzyme A biosynthesis. Its function is as follows. Reversibly transfers an adenylyl group from ATP to 4'-phosphopantetheine, yielding dephospho-CoA (dPCoA) and pyrophosphate. This Methanosarcina acetivorans (strain ATCC 35395 / DSM 2834 / JCM 12185 / C2A) protein is Phosphopantetheine adenylyltransferase.